The primary structure comprises 1019 residues: Clotting factor C (1019 aa).

The signal sequence occupies residues 1–25; it reads MVLASFLVSGLVLGILAQQMRPVQS. The 36-residue stretch at 102-137 folds into the EGF-like domain; it reads YGTWCSGECQCKNGGICDQRTGACTCRDRYEGAHCE. 16 disulfides stabilise this stretch: C110–C118, C112–C125, C127–C136, C142–C182, C168–C195, C199–C241, C227–C254, C260–C308, C294–C321, C331–C350, C354–C374, C464–C564, C538–C556, C576–C621, C607–C634, and C720–C748. Sushi domains follow at residues 140–197, 198–256, and 258–323; these read KGCP…KCIR, ECAK…QCKK, and VFCP…SCVK. Residues 325–421 enclose the LCCL domain; that stretch reads ADREVDCDSK…EELKSLARSF (97 aa). A C-type lectin domain is found at 436–568; it reads CPDGWFEVEE…PSSFACMMDL (133 aa). Residues N523 and N534 are each glycosylated (N-linked (GlcNAc...) asparagine). Sushi domains are found at residues 574–636 and 689–750; these read AKCD…RCIK and PRSS…SCIP. N-linked (GlcNAc...) asparagine glycans are attached at residues N624, N740, and N767. A Peptidase S1 domain is found at 763-1019; the sequence is IWNGNSTEIG…VFLSWIRQFI (257 aa). C794 and C810 are joined by a disulfide. Catalysis depends on charge relay system residues H809 and D865. N-linked (GlcNAc...) asparagine glycosylation is present at N912. A disulfide bridge links C932 with C951. D960 is a binding site for substrate. C962 and C996 are oxidised to a cystine. Catalysis depends on S966, which acts as the Charge relay system.

The protein belongs to the peptidase S1 family. As to quaternary structure, heterodimer of a light chain and a heavy chain linked by a disulfide bond. Forms a covalent heterodimer with intracellular coagulation inhibitor 1/LICI-1. Forms a covalent heterodimer with intracellular coagulation inhibitor 2/LICI-2. In terms of processing, N-glycosylated. Lipopolysaccharide (LPS) activates clotting factor C by inducing the proteolytic cleavage of the clotting factor C light chain into clotting factor C chains A and B. Clotting factor C chains heavy, A and B remain associated via interchain disulfide bonds. As to expression, expressed in hemocytes (at protein level).

The protein localises to the secreted. It carries out the reaction Selective cleavage of 103-Arg-|-Ser-104 and 124-Ile-|-Ile-125 bonds in Limulus clotting factor B to form activated factor B. Cleavage of -Pro-Arg-|-Xaa- bonds in synthetic substrates.. Activated by Gram-negative bacterial lipopolysaccharides. Inhibited by intracellular coagulation inhibitor 1/LICI-1 and to a lesser extent by intracellular coagulation inhibitors 2/LICI-2 and 3/LICI-3. Inhibited by the small molecule diisopropyl fluorophosphate (DFP). In terms of biological role, this enzyme is closely associated with an endotoxin-sensitive hemolymph coagulation system which may play important roles in both hemostasis and host defense mechanisms. Its active form catalyzes the activation of clotting factor B. The polypeptide is Clotting factor C (Tachypleus tridentatus (Japanese horseshoe crab)).